Consider the following 148-residue polypeptide: Deoxyuridine 5'-triphosphate nucleotidohydrolase (148 aa).

Substrate is bound by residues 68-70 (RSG), Asn-81, 85-87 (TID), and Lys-95.

It belongs to the dUTPase family. It depends on Mg(2+) as a cofactor.

The catalysed reaction is dUTP + H2O = dUMP + diphosphate + H(+). Its pathway is pyrimidine metabolism; dUMP biosynthesis; dUMP from dCTP (dUTP route): step 2/2. Functionally, this enzyme is involved in nucleotide metabolism: it produces dUMP, the immediate precursor of thymidine nucleotides and it decreases the intracellular concentration of dUTP so that uracil cannot be incorporated into DNA. The sequence is that of Deoxyuridine 5'-triphosphate nucleotidohydrolase from Rickettsia conorii (strain ATCC VR-613 / Malish 7).